The chain runs to 148 residues: Putative pre-16S rRNA nuclease (148 aa).

The protein belongs to the YqgF nuclease family.

It is found in the cytoplasm. Functionally, could be a nuclease involved in processing of the 5'-end of pre-16S rRNA. The protein is Putative pre-16S rRNA nuclease of Nitrosomonas europaea (strain ATCC 19718 / CIP 103999 / KCTC 2705 / NBRC 14298).